Reading from the N-terminus, the 105-residue chain is Small ribosomal subunit protein uS10 (105 aa).

It belongs to the universal ribosomal protein uS10 family. In terms of assembly, part of the 30S ribosomal subunit.

Its function is as follows. Involved in the binding of tRNA to the ribosomes. The sequence is that of Small ribosomal subunit protein uS10 from Solidesulfovibrio magneticus (strain ATCC 700980 / DSM 13731 / RS-1) (Desulfovibrio magneticus).